We begin with the raw amino-acid sequence, 130 residues long: Small ribosomal subunit protein uS11 (130 aa).

This sequence belongs to the universal ribosomal protein uS11 family. Part of the 30S ribosomal subunit. Interacts with proteins S7 and S18. Binds to IF-3.

In terms of biological role, located on the platform of the 30S subunit, it bridges several disparate RNA helices of the 16S rRNA. Forms part of the Shine-Dalgarno cleft in the 70S ribosome. In Caldicellulosiruptor bescii (strain ATCC BAA-1888 / DSM 6725 / KCTC 15123 / Z-1320) (Anaerocellum thermophilum), this protein is Small ribosomal subunit protein uS11.